The primary structure comprises 602 residues: Aspartate--tRNA(Asp/Asn) ligase (602 aa).

Glu176 serves as a coordination point for L-aspartate. Residues 200–203 (QQFK) form an aspartate region. L-aspartate-binding residues include Arg222 and His452. 222 to 224 (RDE) lines the ATP pocket. Position 490 (Glu490) interacts with ATP. An L-aspartate-binding site is contributed by Arg497. Residue 542–545 (GIDR) coordinates ATP.

It belongs to the class-II aminoacyl-tRNA synthetase family. Type 1 subfamily. In terms of assembly, homodimer.

Its subcellular location is the cytoplasm. It carries out the reaction tRNA(Asx) + L-aspartate + ATP = L-aspartyl-tRNA(Asx) + AMP + diphosphate. Functionally, aspartyl-tRNA synthetase with relaxed tRNA specificity since it is able to aspartylate not only its cognate tRNA(Asp) but also tRNA(Asn). Reaction proceeds in two steps: L-aspartate is first activated by ATP to form Asp-AMP and then transferred to the acceptor end of tRNA(Asp/Asn). This chain is Aspartate--tRNA(Asp/Asn) ligase, found in Rickettsia canadensis (strain McKiel).